The following is a 397-amino-acid chain: Elongation factor Tu (397 aa).

One can recognise a tr-type G domain in the interval 10-206 (KPHVNIGTIG…AVDTAIPEPE (197 aa)). The G1 stretch occupies residues 19-26 (GHIDHGKT). 19-26 (GHIDHGKT) lines the GTP pocket. Mg(2+) is bound at residue Thr-26. The interval 62 to 66 (GITIS) is G2. The segment at 83–86 (DCPG) is G3. Residues 83 to 87 (DCPGH) and 138 to 141 (NKAD) contribute to the GTP site. The tract at residues 138–141 (NKAD) is G4. The segment at 176–178 (SAL) is G5.

It belongs to the TRAFAC class translation factor GTPase superfamily. Classic translation factor GTPase family. EF-Tu/EF-1A subfamily. In terms of assembly, monomer.

It localises to the cytoplasm. It catalyses the reaction GTP + H2O = GDP + phosphate + H(+). GTP hydrolase that promotes the GTP-dependent binding of aminoacyl-tRNA to the A-site of ribosomes during protein biosynthesis. The sequence is that of Elongation factor Tu from Kineococcus radiotolerans (strain ATCC BAA-149 / DSM 14245 / SRS30216).